We begin with the raw amino-acid sequence, 812 residues long: Zn(2)-C6 fungal-type transcription factor pigI (812 aa).

The disordered stretch occupies residues 42-74 (GCLHPRSPPRDRTAMADNSNSSPPASRRREKPQ). The segment at residues 77–105 (CTLCRRRKLRCDRRQPCETCVRRGLSLSC) is a DNA-binding region (zn(2)-C6 fungal-type).

The protein localises to the nucleus. Zn(2)-C6 fungal-type transcription factor; part of the gene cluster that mediates the biosynthesis of azaphilone pigments (MonAzPs), a complex mixture of compounds with a common azaphilone skeleton very widely used as food colorants. Acts probably as a negative regulator of the azaphilone pigments (MonAzPs) gene cluster. The chain is Zn(2)-C6 fungal-type transcription factor pigI from Monascus ruber (Mold).